We begin with the raw amino-acid sequence, 271 residues long: DNA repair protein RecO (271 aa).

The protein belongs to the RecO family.

Involved in DNA repair and RecF pathway recombination. This Rhodococcus erythropolis (strain PR4 / NBRC 100887) protein is DNA repair protein RecO.